A 394-amino-acid polypeptide reads, in one-letter code: NADH dehydrogenase [ubiquinone] iron-sulfur protein 2 (394 aa).

It belongs to the complex I 49 kDa subunit family. In terms of assembly, complex I is composed of at least 49 different subunits. This is a component of the iron-sulfur (IP) fragment of the enzyme.

It localises to the mitochondrion. The catalysed reaction is a ubiquinone + NADH + 5 H(+)(in) = a ubiquinol + NAD(+) + 4 H(+)(out). In terms of biological role, core subunit of the mitochondrial membrane respiratory chain NADH dehydrogenase (Complex I) that is believed to belong to the minimal assembly required for catalysis. Complex I functions in the transfer of electrons from NADH to the respiratory chain. The immediate electron acceptor for the enzyme is believed to be ubiquinone. Component of the iron-sulfur (IP) fragment of the enzyme. This is NADH dehydrogenase [ubiquinone] iron-sulfur protein 2 (NAD7) from Arabidopsis thaliana (Mouse-ear cress).